The following is a 688-amino-acid chain: Putative proline--tRNA ligase YHR020W (688 aa).

At serine 149 the chain carries Phosphoserine. Position 170 is a phosphothreonine (threonine 170). A disordered region spans residues 631–650; the sequence is ESSAKKDDGEEFEEDDKAPS. Phosphoserine is present on serine 655.

The protein belongs to the class-II aminoacyl-tRNA synthetase family.

It catalyses the reaction tRNA(Pro) + L-proline + ATP = L-prolyl-tRNA(Pro) + AMP + diphosphate. The polypeptide is Putative proline--tRNA ligase YHR020W (Saccharomyces cerevisiae (strain ATCC 204508 / S288c) (Baker's yeast)).